A 204-amino-acid chain; its full sequence is Probable dTDP-4-oxo-2,6-dideoxy-D-glucose 3,5-epimerase (204 aa).

Substrate contacts are provided by residues Arg21, Glu26, 45–47 (QAN), Lys70, and His117. Residue Tyr130 is the Proton donor of the active site. Residue Glu141 coordinates substrate. Residues 164 to 204 (VGEGTPTHRPWRRPRRPGILPDYEGVPGALHRGGGRRGTGP) are disordered.

The protein belongs to the dTDP-4-dehydrorhamnose 3,5-epimerase family.

It participates in antibiotic biosynthesis. Involved in the biosynthesis of one of the two 2,6-deoxysugars, dTDP-L-oleandrose, attached to the macrolactone ring oleandolide to produce the aglycone antibiotic oleandomycin. Probably catalyzes the conversion of dTDP-4-keto-2,6-dideoxy-alpha-D-glucose to dTDP-4-keto-2,6-dideoxy-beta-L-galactose. This is Probable dTDP-4-oxo-2,6-dideoxy-D-glucose 3,5-epimerase from Streptomyces antibioticus.